The chain runs to 359 residues: Acidic skeletal organic matrix protein (359 aa).

The N-terminal stretch at 1–26 (MLAPRLAFVLLLSSYFGSILITSVES) is a signal peptide. Disordered regions lie at residues 60-83 (FEEDDDDDDDEDNEESENEVEDFD) and 224-254 (SEAEDPEEVDDAKRAETGKDPICVDPDDPNE). Positions 66 to 89 (DDDDEDNEESENEVEDFDDENALS) form a coiled coil.

In terms of tissue distribution, component of the acid-insoluble and acid-soluble organic matrix of the aragonitic skeleton (at protein level).

The protein localises to the secreted. This Acropora millepora (Staghorn coral) protein is Acidic skeletal organic matrix protein.